Here is a 320-residue protein sequence, read N- to C-terminus: Lactamase-like protein GME11357 (320 aa).

4 residues coordinate Zn(2+): histidine 106, histidine 108, aspartate 110, and histidine 111. The Proton donor/acceptor role is filled by aspartate 110.

The protein belongs to the metallo-beta-lactamase superfamily. Requires Zn(2+) as cofactor.

The protein operates within secondary metabolite biosynthesis. Its function is as follows. Lactamase-like protein; part of the gene cluster that mediates the biosynthesis of dibenzodioxocinones such as pestalotiollide B, a novel class of inhibitors against cholesterol ester transfer protein (CEPT). The biosynthesis initiates from condensation of acetate and malonate units catalyzed by the non-reducing PKS pks8/GME11356. Pks8/GME11356 lacks a thioesterase (TE) domain, which is important to the cyclizing of the third ring of atrochrysone carboxylic acid, and the esterase GME11355 might play the role of TE and catalyzes the cyclization reaction of the C ring. The lactamase-like protein GME11357 (or other beta-lactamases in Pestalotiopsis microspora) probably hydrolyzes the thioester bond between the ACP of pks8/GME11356 and the intermediate to release atrochrysone carboxylic acid, which is spontaneously dehydrates to form endocrocin anthrone. Endocrocin anthrone is further converted to emodin via the endocrocin intermediate. Emodin is then oxidized by several enzymes such as the Baeyer-Villiger oxidase GME11358, the oxidoreductase GME11367, the short chain dehydrogenase/reductase GME11373, as well as by other oxidoreductases from the cluster, to modify the A and C rings and open the B ring, and finally yield monodictyphenone. The prenyltransferase GME11375 may catalyze the addition reaction between the C5 side chains and the carbon bone of dibenzodioxocinones. The remaining biochemical reactions to the final product dibenzodioxocinones should be methylation catalyzed by methyltransferase GME11366 and reduction and lactonization reaction catalyzed by a series of oxidordeuctases. This is Lactamase-like protein GME11357 from Pestalotiopsis microspora.